The chain runs to 319 residues: Formimidoylglutamase (319 aa).

The Mn(2+) site is built by Asn127, Asp150, His152, Asp154, Asp242, and Asp244.

This sequence belongs to the arginase family. The cofactor is Mn(2+).

The catalysed reaction is N-formimidoyl-L-glutamate + H2O = formamide + L-glutamate. It participates in amino-acid degradation; L-histidine degradation into L-glutamate; L-glutamate from N-formimidoyl-L-glutamate (hydrolase route): step 1/1. Catalyzes the conversion of N-formimidoyl-L-glutamate to L-glutamate and formamide. The polypeptide is Formimidoylglutamase (Bacillus subtilis (strain 168)).